We begin with the raw amino-acid sequence, 297 residues long: Syntaxin-4 (297 aa).

The segment covering 1–12 (MRDRTHELRQGD) has biased composition (basic and acidic residues). The interval 1-21 (MRDRTHELRQGDDSSDEEDKE) is disordered. At 1–275 (MRDRTHELRQ…QKKARKKKVL (275 aa)) the chain is on the cytoplasmic side. Serine 14 and serine 15 each carry phosphoserine. At threonine 31 the chain carries Phosphothreonine. Phosphoserine is present on residues serine 36, serine 117, serine 208, and serine 248. Residues 43–163 (HKVRTIRQTI…ERIRRQLKIT (121 aa)) adopt a coiled-coil conformation. The tract at residues 154–297 (ERIRRQLKIT…AVIIGVTVVG (144 aa)) is interaction with CENPF. The t-SNARE coiled-coil homology domain occupies 200 to 262 (LNEISARHSE…ERGQEHVKTA (63 aa)). The chain crosses the membrane as a helical; Anchor for type IV membrane protein span at residues 276 to 296 (IAICVSITVVLLAVIIGVTVV). Glycine 297 is a topological domain (extracellular).

It belongs to the syntaxin family. Component of the SNARE complex composed of STX4, SNAP23 and VAMP7 that interacts with SYT7 during lysosomal exocytosis. Found in a complex with VAMP8 and SNAP23. Detected in a complex with SNAP23 and STXBP4. Interacts with VAMP2. Interacts with SNAP23 and SNAPIN. Interacts with LLGL1. Interacts (via C-terminus) with CENPF. Interacts with DOC2B. Interacts with STXBP6. Interacts with STXBP3; excludes interaction with DOC2B and SNAP25. Interacts with STXBP4; excludes interaction with VAMP2. Interacts with STXBP5L. As to expression, expressed in neutrophils and neutrophil-differentiated HL-60 cells. Expression in neutrophils increases with differentiation.

It localises to the cell membrane. The protein localises to the cell projection. The protein resides in the neuron projection. It is found in the stereocilium. Its function is as follows. Plasma membrane t-SNARE that mediates docking of transport vesicles. Necessary for the translocation of SLC2A4 from intracellular vesicles to the plasma membrane. In neurons, recruited at neurite tips to membrane domains rich in the phospholipid 1-oleoyl-2-palmitoyl-PC (OPPC) which promotes neurite tip surface expression of the dopamine transporter SLC6A3/DAT by facilitating fusion of SLC6A3-containing transport vesicles with the plasma membrane. Together with STXB3 and VAMP2, may also play a role in docking/fusion of intracellular GLUT4-containing vesicles with the cell surface in adipocytes and in docking of synaptic vesicles at presynaptic active zones. Required for normal hearing. The sequence is that of Syntaxin-4 (STX4) from Homo sapiens (Human).